A 319-amino-acid chain; its full sequence is Cytochrome c biogenesis protein CcsA (319 aa).

A run of 8 helical transmembrane segments spans residues valine 11–phenylalanine 31, isoleucine 34–leucine 54, leucine 71–serine 91, leucine 97–leucine 117, isoleucine 142–isoleucine 162, isoleucine 227–asparagine 247, tryptophan 254–leucine 274, and alanine 288–leucine 308.

This sequence belongs to the CcmF/CycK/Ccl1/NrfE/CcsA family. In terms of assembly, may interact with Ccs1.

It localises to the plastid. The protein localises to the chloroplast thylakoid membrane. Functionally, required during biogenesis of c-type cytochromes (cytochrome c6 and cytochrome f) at the step of heme attachment. This is Cytochrome c biogenesis protein CcsA from Porphyra purpurea (Red seaweed).